A 142-amino-acid chain; its full sequence is MARKINCYIKLQVKAGQANPAPPVGPALGQRGLNIMEFCKAFNAATSKLEPGLPTPVIITAYSDRTFTFVTKSTPASVLLKKAAGVTSGSKRPNTDKVGKVTRKQLEEIVKVKEADLTAADLEAAVRTIAGSARSMGLTVEG.

The protein belongs to the universal ribosomal protein uL11 family. As to quaternary structure, part of the ribosomal stalk of the 50S ribosomal subunit. Interacts with L10 and the large rRNA to form the base of the stalk. L10 forms an elongated spine to which L12 dimers bind in a sequential fashion forming a multimeric L10(L12)X complex. In terms of processing, one or more lysine residues are methylated.

Its function is as follows. Forms part of the ribosomal stalk which helps the ribosome interact with GTP-bound translation factors. The chain is Large ribosomal subunit protein uL11 from Xanthomonas oryzae pv. oryzae (strain MAFF 311018).